We begin with the raw amino-acid sequence, 187 residues long: MGIDLIAGGKSKKTKRTAPKSDDVYLKLTVKLYRFLVRRTNSKFNGVILKRLFMSKVNKAPLSLSRLVEFMTGKEDKIAVLVGTITDDLRVHEIPAMKVTALRFTERARARIEKAGGECLTFDQLALRAPLGQNTVLLRGPKNSREAVKHFGPAPGVPHSHSKPYVRAKGRKFEKARGKRKSRGFKV.

A disordered region spans residues 151 to 187 (FGPAPGVPHSHSKPYVRAKGRKFEKARGKRKSRGFKV). 2 stretches are compositionally biased toward basic residues: residues 160–170 (SHSKPYVRAKG) and 177–187 (RGKRKSRGFKV).

The protein belongs to the eukaryotic ribosomal protein eL18 family. In terms of assembly, interacts with NIK1. Interacts directly with EXA1. Ubiquitous.

It localises to the cytoplasm. This Arabidopsis thaliana (Mouse-ear cress) protein is Large ribosomal subunit protein eL18y (RPL18B).